The sequence spans 273 residues: E3 ubiquitin-protein ligase SDIR1 (273 aa).

The Cytoplasmic segment spans residues 1-33; the sequence is MSFVFRGSRGDLESGFSGGFLPERRAMRVHGAR. A helical transmembrane segment spans residues 34-54; it reads PVNSNSLAFLVTVLLLFMILN. The Lumenal segment spans residues 55-56; sequence SH. The chain crosses the membrane as a helical span at residues 57–77; the sequence is QMPPNFLLWLVLGVFLMATTL. Residues 78–273 lie on the Cytoplasmic side of the membrane; it reads RMYATCQQLQ…EIDDDASDMV (196 aa). The segment at 211 to 252 adopts an RING-type; atypical zinc-finger fold; sequence CSVCLEQVTVGEIVRTLPCLHQFHAGCIDPWLRQQGTCPVCK.

As to quaternary structure, interacts with ATP1/SDIRIP1. Ubiquitous.

Its subcellular location is the endoplasmic reticulum membrane. It catalyses the reaction S-ubiquitinyl-[E2 ubiquitin-conjugating enzyme]-L-cysteine + [acceptor protein]-L-lysine = [E2 ubiquitin-conjugating enzyme]-L-cysteine + N(6)-ubiquitinyl-[acceptor protein]-L-lysine.. E3 ubiquitin-protein ligase that acts as a positive regulator of abscisic acid-related stress signal transduction. Interacts with and ubiquitinates ATP1/SDIRIP1 to modulate ATP1/SDIRIP1 stability through the 26S proteasome pathway. Regulates abscisic acid (ABA) and salt stress responses by negatively affecting ATP1/SDIRIP1 stability. The SDIR1-ATP1/SDIRIP1 complex plays an important role in ABA signaling through the ubiquitination pathway. In Arabidopsis thaliana (Mouse-ear cress), this protein is E3 ubiquitin-protein ligase SDIR1.